Here is a 529-residue protein sequence, read N- to C-terminus: Ribonuclease Y (529 aa).

Residues 4–24 (GLIYISLEVLVACLITALVMY) form a helical membrane-spanning segment. Residues 216 to 297 (LTTRIALPCS…NRIEEVYHRV (82 aa)) enclose the KH domain. The HD domain maps to 342-435 (ALQHSKEVAL…VCAADALSAG (94 aa)).

It belongs to the RNase Y family.

The protein resides in the cell membrane. Endoribonuclease that initiates mRNA decay. The sequence is that of Ribonuclease Y from Helicobacter pylori (strain ATCC 700392 / 26695) (Campylobacter pylori).